The sequence spans 216 residues: Inner membrane assembly complex subunit 22 (216 aa).

A mitochondrion-targeting transit peptide spans 1 to 26 (MFMARQVLRNGLFLRSLAPIKITART). Topologically, residues 27–43 (VASANAGIKRKSRFDKT) are mitochondrial matrix. The helical transmembrane segment at 44–63 (MIKPLLLVMIFGSILNAVIA) threads the bilayer. Residues 64 to 93 (EKRNIIDMERKYKLKLDKLKELIRRVHDNN) are a coiled coil. Topologically, residues 64–216 (EKRNIIDMER…KEHDKIPKFL (153 aa)) are mitochondrial intermembrane.

Component of the inner membrane assembly (INA) complex, composed of INA17 and INA22. Interacts with a subset of F(1)F(0)-ATP synthase subunits of the F(1)-domain and the peripheral stalk.

The protein localises to the mitochondrion inner membrane. Functionally, component of the INA complex (INAC) that promotes the biogenesis of mitochondrial F(1)F(0)-ATP synthase. INAC facilitates the assembly of the peripheral stalk and promotes the assembly of the catalytic F(1)-domain with the membrane-embedded F(0)-domain. The polypeptide is Inner membrane assembly complex subunit 22 (Saccharomyces cerevisiae (strain ATCC 204508 / S288c) (Baker's yeast)).